The primary structure comprises 237 residues: V-type proton ATPase subunit E (237 aa).

This sequence belongs to the V-ATPase E subunit family. As to quaternary structure, V-ATPase is a heteromultimeric enzyme composed of a peripheral catalytic V1 complex (components A to H) attached to an integral membrane V0 proton pore complex (components: a, c, c', c'' and d).

Its function is as follows. Subunit of the peripheral V1 complex of vacuolar ATPase essential for assembly or catalytic function. V-ATPase is responsible for acidifying a variety of intracellular compartments in eukaryotic cells. The chain is V-type proton ATPase subunit E (VATE) from Gossypium hirsutum (Upland cotton).